The chain runs to 208 residues: Protein GrpE (208 aa).

The segment covering 1-25 (MVDNKDFNEELKENIQEELDNETKA) has biased composition (basic and acidic residues). The disordered stretch occupies residues 1 to 38 (MVDNKDFNEELKENIQEELDNETKAENPNIDEEVEEVS). The span at 29-38 (NIDEEVEEVS) shows a compositional bias: acidic residues.

This sequence belongs to the GrpE family. As to quaternary structure, homodimer.

The protein resides in the cytoplasm. In terms of biological role, participates actively in the response to hyperosmotic and heat shock by preventing the aggregation of stress-denatured proteins, in association with DnaK and GrpE. It is the nucleotide exchange factor for DnaK and may function as a thermosensor. Unfolded proteins bind initially to DnaJ; upon interaction with the DnaJ-bound protein, DnaK hydrolyzes its bound ATP, resulting in the formation of a stable complex. GrpE releases ADP from DnaK; ATP binding to DnaK triggers the release of the substrate protein, thus completing the reaction cycle. Several rounds of ATP-dependent interactions between DnaJ, DnaK and GrpE are required for fully efficient folding. The protein is Protein GrpE of Clostridium perfringens (strain 13 / Type A).